The following is a 141-amino-acid chain: Large ribosomal subunit protein uL11 (141 aa).

The protein belongs to the universal ribosomal protein uL11 family. Part of the ribosomal stalk of the 50S ribosomal subunit. Interacts with L10 and the large rRNA to form the base of the stalk. L10 forms an elongated spine to which L12 dimers bind in a sequential fashion forming a multimeric L10(L12)X complex. Post-translationally, one or more lysine residues are methylated.

In terms of biological role, forms part of the ribosomal stalk which helps the ribosome interact with GTP-bound translation factors. This Crocosphaera subtropica (strain ATCC 51142 / BH68) (Cyanothece sp. (strain ATCC 51142)) protein is Large ribosomal subunit protein uL11.